A 190-amino-acid polypeptide reads, in one-letter code: CASP-like protein 5A3 (190 aa).

Composition is skewed to low complexity over residues 1–12 and 20–31; these read MRASRPAVHPVE and AAAEGPEAQVEG. The tract at residues 1 to 31 is disordered; the sequence is MRASRPAVHPVEAAPPPPAAAAEGPEAQVEG. Topologically, residues 1-50 are cytoplasmic; it reads MRASRPAVHPVEAAPPPPAAAAEGPEAQVEGAAHPRGVRMKDPPGAPGTP. The chain crosses the membrane as a helical span at residues 51 to 71; sequence AGLGLRLAQAFFAAAALAVMA. Residues 72–81 are Extracellular-facing; that stretch reads STNDFPSVSA. Residues 82-102 traverse the membrane as a helical segment; that stretch reads FSYLVAAAILQCLWSLLLAFV. At 103–126 the chain is on the cytoplasmic side; the sequence is DIYALLVKRSLRNARAVCIFTIGD. The chain crosses the membrane as a helical span at residues 127 to 147; it reads GITGTITLGAACASAGITVLI. The Extracellular portion of the chain corresponds to 148–164; sequence GNDLNICAENHCASFET. A helical membrane pass occupies residues 165 to 185; that stretch reads ATALAFISWFALAPSCILNFW. The Cytoplasmic segment spans residues 186–190; it reads SMASR.

It belongs to the Casparian strip membrane proteins (CASP) family. In terms of assembly, homodimer and heterodimers.

The protein resides in the cell membrane. This Zea mays (Maize) protein is CASP-like protein 5A3.